The chain runs to 255 residues: Probable ubiquitin carboxyl-terminal hydrolase (255 aa).

Positions 13–237 (NWIPLEANPE…IRFNLMGLVK (225 aa)) constitute a UCH catalytic domain. Residues 16–21 (PLEANP) form an interaction with ubiquitin region. The active-site Nucleophile is cysteine 103. The active-site Proton donor is the histidine 177. The tract at residues 227-232 (EIRFNL) is interaction with ubiquitin. The interval 235-255 (LVKKPNEESEEEEEKEKEETK) is disordered. The segment covering 242-255 (ESEEEEEKEKEETK) has biased composition (acidic residues).

It belongs to the peptidase C12 family.

The protein resides in the cytoplasm. The enzyme catalyses Thiol-dependent hydrolysis of ester, thioester, amide, peptide and isopeptide bonds formed by the C-terminal Gly of ubiquitin (a 76-residue protein attached to proteins as an intracellular targeting signal).. Ubiquitin-protein hydrolase is involved both in the processing of ubiquitin precursors and of ubiquitinated proteins. This enzyme is a thiol protease that recognizes and hydrolyzes a peptide bond at the C-terminal glycine of either ubiquitin or nedd8. The polypeptide is Probable ubiquitin carboxyl-terminal hydrolase (uch1) (Dictyostelium discoideum (Social amoeba)).